Consider the following 1152-residue polypeptide: Alpha-mannosidase 2x (1152 aa).

Topologically, residues 1 to 5 (MKLKK) are cytoplasmic. Residues 6–26 (QVTVCGAAIFCVAVFSLYLML) form a helical; Signal-anchor for type II membrane protein membrane-spanning segment. Residues 27–796 (DRVQHDPARH…VDEEQEQQME (770 aa)) are Lumenal-facing. Positions 43–74 (PRSQISVLQNRIEQLEQLLEENHDIISRIKDS) form a coiled coil. Zn(2+)-binding residues include H175 and D177. N225 is a glycosylation site (N-linked (GlcNAc...) asparagine). Position 289 (D289) interacts with Zn(2+). The active-site Nucleophile is the D289. A glycan (N-linked (GlcNAc...) asparagine) is linked at N305. H569 lines the Zn(2+) pocket.

Belongs to the glycosyl hydrolase 38 family. Homodimer; disulfide-linked. Interacts with MGAT4D. Zn(2+) serves as cofactor.

Its subcellular location is the golgi apparatus membrane. It carries out the reaction N(4)-{beta-D-GlcNAc-(1-&gt;2)-alpha-D-Man-(1-&gt;3)-[alpha-D-Man-(1-&gt;3)-[alpha-D-Man-(1-&gt;6)]-alpha-D-Man-(1-&gt;6)]-beta-D-Man-(1-&gt;4)-beta-D-GlcNAc-(1-&gt;4)-beta-D-GlcNAc}-L-asparaginyl-[protein] + 2 H2O = 2 alpha-D-mannopyranose + an N(4)-{beta-D-GlcNAc-(1-&gt;2)-alpha-D-Man-(1-&gt;3)-[alpha-D-Man-(1-&gt;6)]-beta-D-Man-(1-&gt;4)-beta-D-GlcNAc-(1-&gt;4)-beta-D-GlcNAc}-L-asparaginyl-[protein]. It functions in the pathway protein modification; protein glycosylation. Its function is as follows. Catalyzes the first committed step in the biosynthesis of complex N-glycans. It controls conversion of high mannose to complex N-glycans; the final hydrolytic step in the N-glycan maturation pathway. This Mus musculus (Mouse) protein is Alpha-mannosidase 2x (Man2a2).